The chain runs to 107 residues: Replication initiation control protein YabA (107 aa).

Residues histidine 81, cysteine 83, cysteine 97, and cysteine 100 each coordinate Zn(2+).

Belongs to the YabA family. As to quaternary structure, homotetramer. Interacts with both DnaA and DnaN, acting as a bridge between these two proteins. The cofactor is Zn(2+).

Its subcellular location is the cytoplasm. It is found in the nucleoid. In terms of biological role, involved in control of chromosome replication initiation. Inhibits the cooperative binding of DnaA to the oriC region, thus negatively regulating initiation of chromosome replication. Inhibits the ability of DnaA-ATP to form a helix on DNA; does not disassemble preformed DnaA-DNA helices. Decreases the residence time of DnaA on the chromosome at its binding sites (oriC, replication forks and promoter-binding sites). Tethers DnaA to the replication machinery via the DNA polymerase beta sliding clamp subunit (dnaN). Associates with oriC and other DnaA targets on the chromosome in a DnaA-dependent manner. This chain is Replication initiation control protein YabA, found in Streptococcus pyogenes serotype M1.